We begin with the raw amino-acid sequence, 338 residues long: Methionine synthase (338 aa).

Residues histidine 211, cysteine 213, and cysteine 294 each contribute to the Zn(2+) site.

The protein belongs to the archaeal MetE family. Zn(2+) is required as a cofactor.

Its pathway is amino-acid biosynthesis; L-methionine biosynthesis via de novo pathway. Catalyzes the transfer of a methyl group to L-homocysteine resulting in methionine formation. The physiological methyl donor is unknown. The protein is Methionine synthase of Sulfurisphaera tokodaii (strain DSM 16993 / JCM 10545 / NBRC 100140 / 7) (Sulfolobus tokodaii).